The following is a 360-amino-acid chain: G-protein coupled receptor 15 (360 aa).

At 1–33 (MDPEETSVYLDYYYATSPNPDIRETHSHVPYTS) the chain is on the extracellular side. Residues 34 to 54 (VFLPVFYTAVFLTGVLGNLVL) traverse the membrane as a helical segment. Topologically, residues 55–69 (MGALHFKPGSRRLID) are cytoplasmic. The helical transmembrane segment at 70-90 (IFIINLAASDFIFLVTLPLWV) threads the bilayer. Topologically, residues 91-120 (DKEASLGLWRTGSFLCKGSSYMISVNMHCS) are extracellular. A helical transmembrane segment spans residues 121 to 141 (VFLLTCMSVDRYLAIVCPVVS). Residues 142–149 (RKFRRTDC) are Cytoplasmic-facing. The helical transmembrane segment at 150–170 (AYVVCASIWFISCLLGLPTLL) threads the bilayer. Residues 171-192 (SRELTLIDDKPYCAEKKATPLK) are Extracellular-facing. The chain crosses the membrane as a helical span at residues 193 to 213 (LIWSLVALIFTFFVPLLSIVT). Topologically, residues 214-239 (CYCCIARKLCAHYQQSGKHNKKLKKS) are cytoplasmic. Residues 240–260 (IKIIFIVVAAFLVSWLPFNTS) form a helical membrane-spanning segment. Residues 261–284 (KLLAIVSGLQQERYFPSAILQLGM) lie on the Extracellular side of the membrane. Residues 285 to 305 (EVSGPLAFANSCVNPFIYYIF) traverse the membrane as a helical segment. At 306-360 (DSYIRRAIVHCLCPCLKNYDFGSSTETSDSHLTKALSTFIHAEDFTRRRKRSVSL) the chain is on the cytoplasmic side. Ser-359 carries the post-translational modification Phosphoserine.

Belongs to the G-protein coupled receptor 1 family. Interacts with adapter YWHAE; this interaction promotes ER-to-Golgi transport of GPR15. In terms of processing, phosphorylation is necessary for YWHAE binding and efficient surface expression. O-glycosylated. Sialylated O-glycans in the N-terminal tail inhibits binding of GPR15LG. Post-translationally, sulfation is required for efficient binding of GPR15LG.

It is found in the cell membrane. G protein-coupled receptor that plays an important role in immune homeostasis. Acts via its natural ligand GPR15LG, a chemokine-like polypeptide strongly expressed in gastrointestinal tissues. GPR15-GPR15LG signaling axis regulates intestinal homeostasis and inflammation through the migration of immune cells. Controls thereby the specific homing of T-cells, particularly FOXP3+ regulatory T-cells (Tregs), to the large intestine lamina propria. Also required for skin localization of thymus-derived dendritic epidermal T-cells. Plays an important role in mediating cytoprotective function as well as angiogenesis of thrombomodulin. Mechanistically, preferentially signals through the Gi/o pathway to inhibit adenylate cyclase activity and activate a phosphatidylinositol-calcium second messenger system that regulates the release of Ca(2+) ions from intracellular stores. This is G-protein coupled receptor 15 (GPR15) from Macaca nemestrina (Pig-tailed macaque).